Reading from the N-terminus, the 63-residue chain is Defensin-like protein 278 (63 aa).

The first 15 residues, 1–15 (MSLVYMYMYIGVVMS), serve as a signal peptide directing secretion. Cystine bridges form between C31-C48, C37-C53, and C41-C55.

It belongs to the DEFL family.

The protein localises to the secreted. This chain is Defensin-like protein 278, found in Arabidopsis thaliana (Mouse-ear cress).